Reading from the N-terminus, the 309-residue chain is Probable manganese-dependent inorganic pyrophosphatase (309 aa).

Mn(2+)-binding residues include His9, Asp13, Asp15, Asp75, His97, and Asp149.

Belongs to the PPase class C family. The cofactor is Mn(2+).

It is found in the cytoplasm. The catalysed reaction is diphosphate + H2O = 2 phosphate + H(+). This is Probable manganese-dependent inorganic pyrophosphatase from Bacillus cereus (strain AH187).